We begin with the raw amino-acid sequence, 1481 residues long: Cystic fibrosis transmembrane conductance regulator (1481 aa).

At 1–77 (MQKSPLVKAS…KLINALRRCF (77 aa)) the chain is on the cytoplasmic side. Residues 78 to 98 (LWRFIFYGILLYLGEVTKAVQ) traverse the membrane as a helical segment. One can recognise an ABC transmembrane type-1 1 domain in the interval 81–365 (FIFYGILLYL…GAVQTWYDSL (285 aa)). Residues 99 to 122 (PLLLGRIIASYDPDNKEERSIAIY) lie on the Extracellular side of the membrane. Residues 123–146 (LAIGLCLLFIVRTLLLHPAIFGLQ) traverse the membrane as a helical segment. Over 147–195 (HIGMQMRIAMFSLIYKKTLKLSSRVLDKISIGQLVSLLSNNLNKFDEGL) the chain is Cytoplasmic. A helical transmembrane segment spans residues 196 to 216 (ALAHFVWIAPLQVTLLMGLLW). The Extracellular portion of the chain corresponds to 217–222 (DLLQAS). Residues 223 to 243 (AFCGLAVLIVLALFQAWLGKM) traverse the membrane as a helical segment. Topologically, residues 244 to 298 (MMKYRDQRAGKINERLVITSEMIENIQSVKAYCWEEAMEKMIENLRQTELKLTRK) are cytoplasmic. The helical transmembrane segment at 299 to 319 (AAYMRYFNSAAFFFSGFFVVF) threads the bilayer. Over 320-339 (LSVLPYAFLQGIILRKIFTT) the chain is Extracellular. The chain crosses the membrane as a helical span at residues 340–358 (ISFCIVLRMAITRQFPGAV). Topologically, residues 359 to 859 (QTWYDSLGAI…YLRYITVHKS (501 aa)) are cytoplasmic. Residues Trp401, Ser435, 459 to 466 (GSTGAGKT), and Gln494 each bind ATP. In terms of domain architecture, ABC transporter 1 spans 424-647 (NGDNKLFFSN…RPDFSSKLMG (224 aa)). The S-palmitoyl cysteine moiety is linked to residue Cys525. Ser550 is modified (phosphoserine). The disordered R region stretch occupies residues 655–832 (SAERRNSILT…EEINEEDLKE (178 aa)). Residues Ser661 and Ser671 each carry the phosphoserine; by PKA modification. Ser687 carries the post-translational modification Phosphoserine; by PKC. A Glycyl lysine isopeptide (Lys-Gly) (interchain with G-Cter in ubiquitin) cross-link involves residue Lys689. Phosphoserine; by PKA is present on residues Ser701 and Ser713. Thr718 is subject to Phosphothreonine. 4 positions are modified to phosphoserine; by PKA: Ser738, Ser769, Ser796, and Ser814. A helical membrane pass occupies residues 860–880 (LILVLIWCLIIFLAEVAASLV). Residues 860 to 1156 (LILVLIWCLI…AVNSSIDVDS (297 aa)) form the ABC transmembrane type-1 2 domain. Over 881-919 (VLWLLKNNTPQQEMNSTQSGNRSYPVIITNTSFYYIFYI) the chain is Extracellular. Asn895 and Asn901 each carry an N-linked (GlcNAc...) asparagine glycan. A discontinuously helical membrane pass occupies residues 920 to 940 (YVGVADTLLALGLFRGLPLVH). Topologically, residues 941 to 991 (TLITVSKILHHKMLRSVLQAPMSTLNALKAGGILNRFSKDIAILDDLLPLT) are cytoplasmic. Residues 992–1012 (IFDFIQLLLIVIGAIAVVSVL) traverse the membrane as a helical segment. The Extracellular segment spans residues 1013-1014 (QP). A helical transmembrane segment spans residues 1015–1035 (YIFLATVPVIAAFIMLRAYFL). The Cytoplasmic segment spans residues 1036 to 1096 (HTSQQLKQLE…TANWFLYLST (61 aa)). Residues 1097–1117 (LRWFQMRIEMIFVIFFIAVTF) form a helical membrane-spanning segment. Residues 1118-1131 (ISILTTGEGQGSVG) are Extracellular-facing. A helical transmembrane segment spans residues 1132–1152 (IILTLAMNIMSTLQWAVNSSI). Residues 1153–1481 (DVDSLMRSVS…TEEEVQETRL (329 aa)) lie on the Cytoplasmic side of the membrane. One can recognise an ABC transporter 2 domain in the interval 1211–1444 (MIVKDLTAKY…KSLFRQAISS (234 aa)). Residues Tyr1220 and 1245-1252 (GRTGSGKS) each bind ATP. Residues 1387-1481 (RTIKQAFADC…TEEEVQETRL (95 aa)) form an interaction with GORASP2 region. The S-palmitoyl cysteine moiety is linked to residue Cys1396. Residues Ser1445 and Ser1457 each carry the phosphoserine modification. The segment covering 1453-1462 (HRNSSKHKSR) has biased composition (basic residues). The segment at 1453–1481 (HRNSSKHKSRSQITALKEETEEEVQETRL) is disordered. Acidic residues predominate over residues 1471–1481 (ETEEEVQETRL). The PDZ-binding signature appears at 1479 to 1481 (TRL).

It belongs to the ABC transporter superfamily. ABCC family. CFTR transporter (TC 3.A.1.202) subfamily. As to quaternary structure, monomer; does not require oligomerization for channel activity. May form oligomers in the membrane. Interacts with SLC26A3, SLC26A6 and NHERF1. Interacts with SHANK2. Interacts with MYO6. Interacts (via C-terminus) with GOPC (via PDZ domain); this promotes CFTR internalization and thereby decreases channel activity. Interacts with SLC4A7 through NHERF1. Found in a complex with MYO5B and RAB11A. Interacts with ANO1. Interacts with SLC26A8. Interacts with AHCYL1; the interaction increases CFTR activity. Interacts with CSE1L. The core-glycosylated form interacts with GORASP2 (via PDZ GRASP-type 1 domain) in respone to ER stress. Interacts with MARCHF2; the interaction leads to CFTR ubiqtuitination and degradation. Interacts with ADGRG2. In terms of processing, N-glycosylated. Post-translationally, phosphorylated; cAMP treatment promotes phosphorylation and activates the channel. Dephosphorylation decreases the ATPase activity (in vitro). Phosphorylation at PKA sites activates the channel. Phosphorylation at PKC sites enhances the response to phosphorylation by PKA. Phosphorylated by AMPK; this inhibits channel activity. Ubiquitinated, leading to its degradation in the lysosome. Deubiquitination by USP10 in early endosomes enhances its endocytic recycling to the cell membrane. Ubiquitinated by RNF185 during ER stress. Ubiquitinated by MARCHF2.

It is found in the apical cell membrane. The protein localises to the early endosome membrane. Its subcellular location is the cell membrane. It localises to the recycling endosome membrane. The protein resides in the endoplasmic reticulum membrane. It is found in the nucleus. It carries out the reaction ATP + H2O + closed Cl(-) channel = ADP + phosphate + open Cl(-) channel.. The enzyme catalyses chloride(in) = chloride(out). It catalyses the reaction hydrogencarbonate(in) = hydrogencarbonate(out). The catalysed reaction is ATP + H2O = ADP + phosphate + H(+). In terms of biological role, epithelial ion channel that plays an important role in the regulation of epithelial ion and water transport and fluid homeostasis. Mediates the transport of chloride ions across the cell membrane. Possesses an intrinsic ATPase activity and utilizes ATP to gate its channel; the passive flow of anions through the channel is gated by cycles of ATP binding and hydrolysis by the ATP-binding domains. The ion channel is also permeable to HCO(3)(-); selectivity depends on the extracellular chloride concentration. Exerts its function also by modulating the activity of other ion channels and transporters. Contributes to the regulation of the pH and the ion content of the epithelial fluid layer. Modulates the activity of the epithelial sodium channel (ENaC) complex, in part by regulating the cell surface expression of the ENaC complex. May regulate bicarbonate secretion and salvage in epithelial cells by regulating the transporter SLC4A7. Can inhibit the chloride channel activity of ANO1. Plays a role in the chloride and bicarbonate homeostasis during sperm epididymal maturation and capacitation. In Cavia porcellus (Guinea pig), this protein is Cystic fibrosis transmembrane conductance regulator.